The following is a 191-amino-acid chain: Signal peptidase complex catalytic subunit sec11 (191 aa).

Residues 1–18 (MLSALGGNLSNARQSIAQ) are Cytoplasmic-facing. Residues 19-39 (VLNFALVLSTAFMLWKGVSIA) traverse the membrane as a helical; Signal-anchor for type II membrane protein segment. Topologically, residues 40 to 191 (SNSSSPIVVV…MGLMVILQRE (152 aa)) are lumenal. An N-linked (GlcNAc...) asparagine glycan is attached at Asn-41. Residues Ser-53, His-92, and Asp-133 each act as charge relay system in the active site. A C-terminal short (CTS) helix region spans residues 177 to 188 (VLLGVMGLMVIL).

Belongs to the peptidase S26B family. Component of the signal peptidase complex (SPC) composed of a catalytic subunit SEC11 and three accessory subunits SPC1, SPC2 and SPC3. The complex induces a local thinning of the ER membrane which is used to measure the length of the signal peptide (SP) h-region of protein substrates. This ensures the selectivity of the complex towards h-regions shorter than 18-20 amino acids. SPC associates with the translocon complex.

The protein resides in the endoplasmic reticulum membrane. It carries out the reaction Cleavage of hydrophobic, N-terminal signal or leader sequences from secreted and periplasmic proteins.. In terms of biological role, catalytic component of the signal peptidase complex (SPC) which catalyzes the cleavage of N-terminal signal sequences from nascent proteins as they are translocated into the lumen of the endoplasmic reticulum. Specifically cleaves N-terminal signal peptides that contain a hydrophobic alpha-helix (h-region) shorter than 18-20 amino acids. In Talaromyces marneffei (strain ATCC 18224 / CBS 334.59 / QM 7333) (Penicillium marneffei), this protein is Signal peptidase complex catalytic subunit sec11 (sec11).